Consider the following 377-residue polypeptide: uncharacterized protein (377 aa).

Residues 1–22 (MKFKYGTVVLGSFLGLSVVLAA) form the signal peptide. Cys23 carries the N-palmitoyl cysteine lipid modification. A lipid anchor (S-diacylglycerol cysteine) is attached at Cys23. Positions 217–260 (AKANGETNQKGRKAAKSNKTALVQLKNGADTTTNEENKDTKTSD) are disordered. Residues 251 to 260 (EENKDTKTSD) are compositionally biased toward basic and acidic residues.

Belongs to the MG185/MG260 family.

The protein localises to the cell membrane. This is an uncharacterized protein from Mycoplasma pneumoniae (strain ATCC 29342 / M129 / Subtype 1) (Mycoplasmoides pneumoniae).